Reading from the N-terminus, the 815-residue chain is Tubulin polyglutamylase TTLL13 (815 aa).

Positions 85 to 430 (RRSLAINLTN…RGCDKRKVME (346 aa)) constitute a TTL domain. Residues K202, 208–209 (QG), 230–233 (QQYI), and 243–245 (KFD) contribute to the ATP site. Q208 lines the a protein pocket. R269 is an L-glutamate binding site. 291-292 (TN) is an ATP binding site. Residues Y293 and K311 each contribute to the L-glutamate site. Residues D376, E389, and N391 each coordinate Mg(2+). A c-MTBD region region spans residues 401–482 (CLDQEVKDAL…LGKYRRIYPG (82 aa)). K407 lines the L-glutamate pocket. The stretch at 504-528 (ASKAREECARQQLEEIRLKQEQQET) forms a coiled coil. A disordered region spans residues 520–556 (RLKQEQQETSGTKRQKARDQNQGESAGEKSRPRAGLQ). The span at 536–550 (ARDQNQGESAGEKSR) shows a compositional bias: basic and acidic residues.

Belongs to the tubulin--tyrosine ligase family. It depends on Mg(2+) as a cofactor.

It carries out the reaction (L-glutamyl)(n)-gamma-L-glutamyl-L-glutamyl-[protein] + L-glutamate + ATP = (L-glutamyl)(n+1)-gamma-L-glutamyl-L-glutamyl-[protein] + ADP + phosphate + H(+). Functionally, polyglutamylase which modifies tubulin, generating polyglutamate side chains of variable lengths on the gamma-carboxyl group of specific glutamate residues within the C-terminal tail of tubulin. Mediates ATP-dependent polyglutamate side-chain elongation of the polyglutamylation reaction but not the initiation step. Preferentially modifies the alpha-tubulin tail over a beta-tail. This Homo sapiens (Human) protein is Tubulin polyglutamylase TTLL13.